The primary structure comprises 132 residues: Small ribosomal subunit protein uS8 (132 aa).

Belongs to the universal ribosomal protein uS8 family. Part of the 30S ribosomal subunit. Contacts proteins S5 and S12.

In terms of biological role, one of the primary rRNA binding proteins, it binds directly to 16S rRNA central domain where it helps coordinate assembly of the platform of the 30S subunit. In Leuconostoc mesenteroides subsp. mesenteroides (strain ATCC 8293 / DSM 20343 / BCRC 11652 / CCM 1803 / JCM 6124 / NCDO 523 / NBRC 100496 / NCIMB 8023 / NCTC 12954 / NRRL B-1118 / 37Y), this protein is Small ribosomal subunit protein uS8.